The primary structure comprises 106 residues: NADH-quinone oxidoreductase subunit K (106 aa).

Helical transmembrane passes span 10–30 (VTYI…GVLI), 34–54 (IVII…VFVT), and 67–87 (IVFF…ALVI).

Belongs to the complex I subunit 4L family. In terms of assembly, NDH-1 is composed of 14 different subunits. Subunits NuoA, H, J, K, L, M, N constitute the membrane sector of the complex.

It is found in the cell inner membrane. It carries out the reaction a quinone + NADH + 5 H(+)(in) = a quinol + NAD(+) + 4 H(+)(out). Its function is as follows. NDH-1 shuttles electrons from NADH, via FMN and iron-sulfur (Fe-S) centers, to quinones in the respiratory chain. The immediate electron acceptor for the enzyme in this species is believed to be ubiquinone. Couples the redox reaction to proton translocation (for every two electrons transferred, four hydrogen ions are translocated across the cytoplasmic membrane), and thus conserves the redox energy in a proton gradient. The sequence is that of NADH-quinone oxidoreductase subunit K from Leptospira biflexa serovar Patoc (strain Patoc 1 / Ames).